We begin with the raw amino-acid sequence, 330 residues long: Alpha-1,6-glucosyltransferase (330 aa).

The protein belongs to the glycosyltransferase group 1 family. Requires Does not require a metal cofactor. as cofactor.

It localises to the cytoplasm. It participates in protein modification; protein glycosylation. Its function is as follows. Catalyzes the transfer of a glucose moiety from UDP-glucose to another glucose that is N-linked to an asparagine within a peptide or protein. Can act in a repetitive manner, and this way it elongates the N-linked glucose by a glycan chain consisting of several alpha-1-&gt;6 linked glucose residues. Is able to add up to six glucose units in vitro. Cannot use UDP-Gal, UDP-GlcNAc or UDP-GalNAc as a substrate donor. The sequence is that of Alpha-1,6-glucosyltransferase from Actinobacillus pleuropneumoniae serotype 7 (strain AP76).